A 223-amino-acid polypeptide reads, in one-letter code: Cytidylate kinase (223 aa).

17 to 25 is an ATP binding site; the sequence is GPTASGKGT.

The protein belongs to the cytidylate kinase family. Type 1 subfamily.

Its subcellular location is the cytoplasm. The catalysed reaction is CMP + ATP = CDP + ADP. It carries out the reaction dCMP + ATP = dCDP + ADP. This chain is Cytidylate kinase, found in Bordetella bronchiseptica (strain ATCC BAA-588 / NCTC 13252 / RB50) (Alcaligenes bronchisepticus).